We begin with the raw amino-acid sequence, 682 residues long: MSRSQNEEFQQWWNKQRDRNNHDVLYAGDDEAFLTVEIRTPATVDPDKDRIRTRTVRQLSRLYLLKFKQLASSFLWIGNSFLYLVRTANRRIANDNPPSVSSSARLYRLIKGFLVVVVLLLCFELAAYFKGWHFTPPSVASAEVAVEVVYAWWLEIRASYLAPPLQSLTNVCIVLFLIQSVDRLVLVLGCFWIKLRRIKPVASMEYPTKLVGEGVRLEDYPMVIVQIPMCNEKEVYQQSIGAVCMLDWPRERMLVQVLDDSSELDVQQLIKAEVQKWQQRGVRIVYRHRLIRTGYKAGNLKAAMNCEYVKDYEFVAIFDADFQPPADFLKKTVPHFKGNEELALVQTRWAFVNKDENLLTRLQNINLSFHFEVEQQVNGVFINFFGFNGTAGVWRIKALEDCGGWLERTTVEDMDIAVRAHLCGWKFIYLNDVKCLCELPESYEAYKKQQYRWHSGPMQLFRLCFFDILRSKVSAAKKANMIFLFFLLRKLILPFYSFTLFCVILPLTMFFPEANLPSWVVCYIPGIMSILNIIPAPRSFPFIVPYLLFENTMSVTKFGAMISGLFKFDSSYEWVVTKKLGRSSEADLVAYAESGSLVESTTIQRSSSDSGLTELSKLGAAKKAGKTKRNRLYRTEIALAFILLAASVRSLLSAQGIHFYFLLFQGITFVIVGLDLIGEQVS.

Transmembrane regions (helical) follow at residues 109–129 and 173–193; these read LIKGFLVVVVLLLCFELAAYF and IVLFLIQSVDRLVLVLGCFWI. Residue Asp-260 is part of the active site. The substrate site is built by Asp-319 and Asp-321. The active site involves Asp-413. 2 helical membrane passes run 491-511 and 516-536; these read LILPFYSFTLFCVILPLTMFF and LPSWVVCYIPGIMSILNIIPA. A Phosphoserine modification is found at Ser-608. Helical transmembrane passes span 632–651 and 657–677; these read LYRTEIALAFILLAASVRSL and IHFYFLLFQGITFVIVGLDLI.

Belongs to the glycosyltransferase 2 family. Plant cellulose synthase-like C subfamily. Homodimer. Mainly expressed in flowers and seeds, and, to a lower extent, in seedlings, roots, leaves and stems.

The protein resides in the golgi apparatus membrane. Its function is as follows. Probable beta-1,4-glucan synthase rather involved in the synthesis of the xyloglucan backbone than cellulose. Seems to work simultaneously with xyloglucan 6-xylosyltransferase. Xyloglucan is a noncellulosic polysaccharides of plant cell wall and consists of a glucan backbone substituted by xylose, galactose and fucose. The chain is Probable xyloglucan glycosyltransferase 6 from Arabidopsis thaliana (Mouse-ear cress).